The following is a 211-amino-acid chain: Histidine biosynthesis bifunctional protein HisIE (211 aa).

Residues 1-122 (MSFKTAEVSS…DPQEESQMVW (122 aa)) form a phosphoribosyl-AMP cyclohydrolase region. Residues 123-211 (LHQLEQLLAA…VINKLKERHK (89 aa)) are phosphoribosyl-ATP pyrophosphohydrolase.

The protein in the N-terminal section; belongs to the PRA-CH family. This sequence in the C-terminal section; belongs to the PRA-PH family.

The protein localises to the cytoplasm. The enzyme catalyses 1-(5-phospho-beta-D-ribosyl)-ATP + H2O = 1-(5-phospho-beta-D-ribosyl)-5'-AMP + diphosphate + H(+). It catalyses the reaction 1-(5-phospho-beta-D-ribosyl)-5'-AMP + H2O = 1-(5-phospho-beta-D-ribosyl)-5-[(5-phospho-beta-D-ribosylamino)methylideneamino]imidazole-4-carboxamide. It participates in amino-acid biosynthesis; L-histidine biosynthesis; L-histidine from 5-phospho-alpha-D-ribose 1-diphosphate: step 2/9. The protein operates within amino-acid biosynthesis; L-histidine biosynthesis; L-histidine from 5-phospho-alpha-D-ribose 1-diphosphate: step 3/9. In Vibrio vulnificus (strain CMCP6), this protein is Histidine biosynthesis bifunctional protein HisIE.